Consider the following 245-residue polypeptide: tRNA (guanine-N(7)-)-methyltransferase (245 aa).

Residues Glu69, Glu94, Asp121, and Asp144 each contribute to the S-adenosyl-L-methionine site. Residue Asp144 is part of the active site. Substrate-binding positions include Lys148, Asp180, and 217 to 220; that span reads TKFE. The disordered stretch occupies residues 200 to 225; the sequence is NLSSSGDYVPRPENRPKTKFERRGEG. Residues 209-225 are compositionally biased toward basic and acidic residues; the sequence is PRPENRPKTKFERRGEG.

This sequence belongs to the class I-like SAM-binding methyltransferase superfamily. TrmB family.

It carries out the reaction guanosine(46) in tRNA + S-adenosyl-L-methionine = N(7)-methylguanosine(46) in tRNA + S-adenosyl-L-homocysteine. It participates in tRNA modification; N(7)-methylguanine-tRNA biosynthesis. Its function is as follows. Catalyzes the formation of N(7)-methylguanine at position 46 (m7G46) in tRNA. The sequence is that of tRNA (guanine-N(7)-)-methyltransferase from Idiomarina loihiensis (strain ATCC BAA-735 / DSM 15497 / L2-TR).